We begin with the raw amino-acid sequence, 132 residues long: Glycine cleavage system H protein (132 aa).

In terms of domain architecture, Lipoyl-binding spans 24-107 (TATIGLSAFA…GEEGWLIKVR (84 aa)). K65 carries the N6-lipoyllysine modification.

Belongs to the GcvH family. In terms of assembly, the glycine cleavage system is composed of four proteins: P, T, L and H. (R)-lipoate is required as a cofactor.

The glycine cleavage system catalyzes the degradation of glycine. The H protein shuttles the methylamine group of glycine from the P protein to the T protein. The sequence is that of Glycine cleavage system H protein from Synechocystis sp. (strain ATCC 27184 / PCC 6803 / Kazusa).